Consider the following 117-residue polypeptide: Transcription elongation factor SPT4-B (117 aa).

Residues 1 to 40 (MALETVPKDLRHLRACLLCSLVKTIDQFEYDGCDNCDAYL) are interaction with SUPT5H. The segment at 16–36 (CLLCSLVKTIDQFEYDGCDNC) adopts a C4-type zinc-finger fold.

It belongs to the SPT4 family. In terms of assembly, interacts with SUPT5H to form DSIF. DSIF interacts with the positive transcription elongation factor b complex (P-TEFb complex), which is composed of CDK9 and cyclin-T (CCNT1 or CCNT2). DSIF interacts with RNA polymerase II, and this interaction is reduced by phosphorylation of the C-terminal domain (CTD) of POLR2A by P-TEFb. DSIF also interacts with the NELF complex, which is composed of WHSC2/NELFA, COBRA1/NELFB, TH1L/NELFD and RDBP/NELFE, and this interaction occurs following prior binding of DSIF to RNA polymerase II. DSIF also interacts with HRMT1L2/PRMT1, HTATSF1/TATSF1, RNGTT/CAP1A, SKB1/PRMT5, SUPT6H, and can interact with PIN1. In terms of processing, ubiquitinated by Ubr5 when not assembled in the DSIF complex, leading to its degradation: Ubr5 recognizes and binds a degron that is not accessible when Supt4h1b is part of the DSIF complex. Expressed in brain, heart and liver.

It is found in the nucleus. In terms of biological role, component of the DRB sensitivity-inducing factor complex (DSIF complex), which regulates mRNA processing and transcription elongation by RNA polymerase II. DSIF positively regulates mRNA capping by stimulating the mRNA guanylyltransferase activity of RNGTT/CAP1A. DSIF also acts cooperatively with the negative elongation factor complex (NELF complex) to enhance transcriptional pausing at sites proximal to the promoter. Transcriptional pausing may facilitate the assembly of an elongation competent RNA polymerase II complex. DSIF and NELF promote pausing by inhibition of the transcription elongation factor TFIIS/S-II. TFIIS/S-II binds to RNA polymerase II at transcription pause sites and stimulates the weak intrinsic nuclease activity of the enzyme. Cleavage of blocked transcripts by RNA polymerase II promotes the resumption of transcription from the new 3' terminus and may allow repeated attempts at transcription through natural pause sites. In Mus musculus (Mouse), this protein is Transcription elongation factor SPT4-B (Supt4h1b).